The following is a 259-amino-acid chain: 5'-nucleotidase SurE (259 aa).

The a divalent metal cation site is built by aspartate 8, aspartate 9, serine 40, and asparagine 92.

Belongs to the SurE nucleotidase family. The cofactor is a divalent metal cation.

Its subcellular location is the cytoplasm. It carries out the reaction a ribonucleoside 5'-phosphate + H2O = a ribonucleoside + phosphate. Its function is as follows. Nucleotidase that shows phosphatase activity on nucleoside 5'-monophosphates. This chain is 5'-nucleotidase SurE, found in Xanthomonas euvesicatoria pv. vesicatoria (strain 85-10) (Xanthomonas campestris pv. vesicatoria).